The chain runs to 431 residues: Adenylosuccinate synthetase (431 aa).

GTP-binding positions include 13-19 and 41-43; these read GDEGKGK and GHT. D14 (proton acceptor) is an active-site residue. Mg(2+) contacts are provided by D14 and G41. Residues 14–17, 39–42, T130, R144, Q225, T240, and R304 each bind IMP; these read DEGK and NAGH. H42 serves as the catalytic Proton donor. Residue 300-306 coordinates substrate; that stretch reads AVTGRPR. Residues R306, 332–334, and 415–417 each bind GTP; these read KLD and STG.

Belongs to the adenylosuccinate synthetase family. As to quaternary structure, homodimer. Mg(2+) is required as a cofactor.

Its subcellular location is the cytoplasm. The enzyme catalyses IMP + L-aspartate + GTP = N(6)-(1,2-dicarboxyethyl)-AMP + GDP + phosphate + 2 H(+). The protein operates within purine metabolism; AMP biosynthesis via de novo pathway; AMP from IMP: step 1/2. In terms of biological role, plays an important role in the de novo pathway of purine nucleotide biosynthesis. Catalyzes the first committed step in the biosynthesis of AMP from IMP. This Legionella pneumophila (strain Paris) protein is Adenylosuccinate synthetase.